The chain runs to 409 residues: Argininosuccinate synthase (409 aa).

9 to 17 (AYSGGLDTS) contributes to the ATP binding site. Tyrosine 86 is a binding site for L-citrulline. Residue glycine 116 participates in ATP binding. L-aspartate is bound by residues threonine 118, asparagine 122, and aspartate 123. Asparagine 122 contributes to the L-citrulline binding site. L-citrulline contacts are provided by arginine 126, serine 174, serine 183, glutamate 259, and tyrosine 271.

The protein belongs to the argininosuccinate synthase family. Type 1 subfamily. As to quaternary structure, homotetramer.

The protein localises to the cytoplasm. The catalysed reaction is L-citrulline + L-aspartate + ATP = 2-(N(omega)-L-arginino)succinate + AMP + diphosphate + H(+). The protein operates within amino-acid biosynthesis; L-arginine biosynthesis; L-arginine from L-ornithine and carbamoyl phosphate: step 2/3. This is Argininosuccinate synthase from Halalkalibacterium halodurans (strain ATCC BAA-125 / DSM 18197 / FERM 7344 / JCM 9153 / C-125) (Bacillus halodurans).